The sequence spans 276 residues: NH(3)-dependent NAD(+) synthetase (276 aa).

43 to 50 (GISGGVDS) serves as a coordination point for ATP. Aspartate 49 is a binding site for Mg(2+). Arginine 146 contacts deamido-NAD(+). Threonine 166 contributes to the ATP binding site. Glutamate 171 is a binding site for Mg(2+). Lysine 179 and aspartate 186 together coordinate deamido-NAD(+). ATP is bound by residues lysine 195 and threonine 217. Residue 266–267 (HK) participates in deamido-NAD(+) binding.

This sequence belongs to the NAD synthetase family. In terms of assembly, homodimer.

It catalyses the reaction deamido-NAD(+) + NH4(+) + ATP = AMP + diphosphate + NAD(+) + H(+). It participates in cofactor biosynthesis; NAD(+) biosynthesis; NAD(+) from deamido-NAD(+) (ammonia route): step 1/1. Catalyzes the ATP-dependent amidation of deamido-NAD to form NAD. Uses ammonia as a nitrogen source. The chain is NH(3)-dependent NAD(+) synthetase from Aliivibrio fischeri (strain MJ11) (Vibrio fischeri).